A 538-amino-acid polypeptide reads, in one-letter code: Ribulokinase 1 (538 aa).

The protein belongs to the ribulokinase family.

It carries out the reaction D-ribulose + ATP = D-ribulose 5-phosphate + ADP + H(+). The catalysed reaction is L-ribulose + ATP = L-ribulose 5-phosphate + ADP + H(+). It functions in the pathway carbohydrate degradation; L-arabinose degradation via L-ribulose; D-xylulose 5-phosphate from L-arabinose (bacterial route): step 2/3. This Staphylococcus saprophyticus subsp. saprophyticus (strain ATCC 15305 / DSM 20229 / NCIMB 8711 / NCTC 7292 / S-41) protein is Ribulokinase 1.